Here is a 103-residue protein sequence, read N- to C-terminus: Enhancer of rudimentary homolog (103 aa).

It belongs to the E(R) family. As to quaternary structure, homodimer.

Its function is as follows. May have a role in the cell cycle. The sequence is that of Enhancer of rudimentary homolog from Caenorhabditis elegans.